The sequence spans 73 residues: Conotoxin Im14.3 (73 aa).

The first 17 residues, 1–17 (MGVFRCCLAAALVVVCL), serve as a signal peptide directing secretion. Positions 18-35 (SRMGGTEPLESNHEDERR) are excised as a propeptide. A disordered region spans residues 22–42 (GTEPLESNHEDERRADDTSGD). A compositionally biased stretch (basic and acidic residues) spans 27-38 (ESNHEDERRADD). The ShKT domain occupies 44–73 (CVDTNEDCVNWASTGQCEANPSYMRENCRK).

Contain 2 disulfide bonds. As to expression, expressed by the venom duct.

The protein resides in the secreted. Probable neurotoxin. This Conus imperialis (Imperial cone) protein is Conotoxin Im14.3.